The chain runs to 584 residues: DNA ligase (584 aa).

Residue Glu-249 coordinates ATP. Lys-251 acts as the N6-AMP-lysine intermediate in catalysis. 6 residues coordinate ATP: Arg-256, Arg-271, Glu-301, Phe-341, Arg-416, and Lys-422.

It belongs to the ATP-dependent DNA ligase family. Requires Mg(2+) as cofactor.

It catalyses the reaction ATP + (deoxyribonucleotide)n-3'-hydroxyl + 5'-phospho-(deoxyribonucleotide)m = (deoxyribonucleotide)n+m + AMP + diphosphate.. In terms of biological role, DNA ligase that seals nicks in double-stranded DNA during DNA replication, DNA recombination and DNA repair. This Pyrobaculum neutrophilum (strain DSM 2338 / JCM 9278 / NBRC 100436 / V24Sta) (Thermoproteus neutrophilus) protein is DNA ligase.